The chain runs to 294 residues: Protein ATC1/LIC4 (294 aa).

Positions 114–178 are disordered; it reads YTGKASLDKS…SSSLASSDAN (65 aa). Residues 130–145 are compositionally biased toward basic and acidic residues; it reads HKPDKEQKNYKIDKPT. Positions 153–175 are enriched in low complexity; sequence LKTTNEPMLSPASLSPSSSLASS.

Its subcellular location is the cytoplasm. It localises to the nucleus. Its function is as follows. Involved in cation homeostasis and in the regulation of the cation stress signaling cascades. Also involved in bipolar budding. This chain is Protein ATC1/LIC4 (ATC1), found in Saccharomyces cerevisiae (strain ATCC 204508 / S288c) (Baker's yeast).